We begin with the raw amino-acid sequence, 129 residues long: Small ribosomal subunit protein uS11 (129 aa).

It belongs to the universal ribosomal protein uS11 family. As to quaternary structure, part of the 30S ribosomal subunit. Interacts with proteins S7 and S18. Binds to IF-3.

In terms of biological role, located on the platform of the 30S subunit, it bridges several disparate RNA helices of the 16S rRNA. Forms part of the Shine-Dalgarno cleft in the 70S ribosome. This is Small ribosomal subunit protein uS11 from Pseudomonas entomophila (strain L48).